The following is a 356-amino-acid chain: sn-glycerol-3-phosphate import ATP-binding protein UgpC (356 aa).

Residues 4–235 (LKLQAVTKSW…PASLFVASFI (232 aa)) form the ABC transporter domain. Residue 37 to 44 (GPSGCGKS) coordinates ATP.

It belongs to the ABC transporter superfamily. sn-glycerol-3-phosphate importer (TC 3.A.1.1.3) family. As to quaternary structure, the complex is composed of two ATP-binding proteins (UgpC), two transmembrane proteins (UgpA and UgpE) and a solute-binding protein (UgpB).

It is found in the cell inner membrane. It catalyses the reaction sn-glycerol 3-phosphate(out) + ATP + H2O = sn-glycerol 3-phosphate(in) + ADP + phosphate + H(+). In terms of biological role, part of the ABC transporter complex UgpBAEC involved in sn-glycerol-3-phosphate (G3P) import. Responsible for energy coupling to the transport system. This is sn-glycerol-3-phosphate import ATP-binding protein UgpC from Escherichia coli O157:H7.